The chain runs to 63 residues: Large ribosomal subunit protein uL30 (63 aa).

It belongs to the universal ribosomal protein uL30 family. Part of the 50S ribosomal subunit.

The protein is Large ribosomal subunit protein uL30 of Natranaerobius thermophilus (strain ATCC BAA-1301 / DSM 18059 / JW/NM-WN-LF).